Here is a 135-residue protein sequence, read N- to C-terminus: uncharacterized protein (135 aa).

This is an uncharacterized protein from Fowl adenovirus A serotype 1 (strain CELO / Phelps) (FAdV-1).